A 367-amino-acid chain; its full sequence is Pentatricopeptide repeat-containing protein At1g11900 (367 aa).

8 PPR repeats span residues 69–103, 104–139, 141–175, 176–210, 211–241, 247–281, 282–316, and 317–347; these read SKIDYTNLVEKFTRDGNLSGAYDLLQSLQEKNICL, PISVFKNLLAAAGELNDMKLSCRVFREVLILPGKEP, SSDCYLNLARAFINTDDCTYLTSLLKEISESSLPY, RLIVMNRIIFAFAETRQIDKVLMILKEMKEWECKP, DVITYNSVLDILGRAGLVNEILGVLSTMKED, NIITYNTVLNGMRKACRFDMCLVIYNEMVQCGIEP, DLLSYTAVIDSLGRSGNVKESLRLFDEMKQRQIRP, and SVYVYRALIDCLKKSGDFQSALQLSDELKNT.

It belongs to the PPR family. P subfamily.

The protein is Pentatricopeptide repeat-containing protein At1g11900 of Arabidopsis thaliana (Mouse-ear cress).